The primary structure comprises 147 residues: Cyanate hydratase (147 aa).

Active-site residues include R88, E91, and S114.

This sequence belongs to the cyanase family.

It carries out the reaction cyanate + hydrogencarbonate + 3 H(+) = NH4(+) + 2 CO2. Functionally, catalyzes the reaction of cyanate with bicarbonate to produce ammonia and carbon dioxide. The polypeptide is Cyanate hydratase (Variovorax paradoxus (strain S110)).